The primary structure comprises 62 residues: Neurotoxin 3 (62 aa).

Residues 1–16 (LECHDQQSSQTPTTTG) are compositionally biased toward polar residues. Residues 1–22 (LECHDQQSSQTPTTTGCSGGET) form a disordered region. Intrachain disulfides connect Cys3-Cys24, Cys17-Cys41, Cys43-Cys54, and Cys55-Cys60.

It belongs to the three-finger toxin family. Short-chain subfamily. Type I alpha-neurotoxin sub-subfamily. In terms of tissue distribution, expressed by the venom gland.

It localises to the secreted. In terms of biological role, binds to muscle nicotinic acetylcholine receptor (nAChR) and inhibit acetylcholine from binding to the receptor, thereby impairing neuromuscular transmission. In Naja sputatrix (Malayan spitting cobra), this protein is Neurotoxin 3.